The sequence spans 219 residues: Vacuolar protein sorting-associated protein 20 homolog 1 (219 aa).

Positions 20–60 (SLKTQRRKLGQYQQKLEKVIEAEKQAARDLIREKRKDRALL) form a coiled coil. The segment at 171-219 (PEVPTKESEESEKLDLPDVPTKTPVASNAEITPAESATKTKVLEEPLPA) is disordered. Basic and acidic residues predominate over residues 174–186 (PTKESEESEKLDL). The span at 194–209 (PVASNAEITPAESATK) shows a compositional bias: polar residues.

This sequence belongs to the SNF7 family. In terms of assembly, component of the endosomal sorting required for transport complex III (ESCRT-III), composed at least of VPS2, VPS20, VPS24 and VPS32. Interacts with SKD1.

The protein resides in the endosome. In terms of biological role, component of the ESCRT-III complex, which is required for multivesicular bodies (MVBs) formation and sorting of endosomal cargo proteins into MVBs. The ESCRT-III complex is probably involved in the concentration of MVB cargo. The chain is Vacuolar protein sorting-associated protein 20 homolog 1 (VPS20.1) from Arabidopsis thaliana (Mouse-ear cress).